The primary structure comprises 504 residues: Kinesin light chain 3 (504 aa).

The stretch at Ala-90 to Leu-150 forms a coiled coil. The tract at residues Leu-153–Gln-197 is disordered. A compositionally biased stretch (low complexity) spans Pro-158–Ser-167. At Ser-173 the chain carries Phosphoserine. 5 TPR repeats span residues Leu-207–Ser-240, Ala-249–Thr-282, Ala-291–Val-324, Ala-333–Leu-366, and Ala-375–Pro-408. The tract at residues Leu-411–Ser-438 is disordered. Position 466 is a phosphoserine (Ser-466). The residue at position 498 (Thr-498) is a Phosphothreonine. Phosphoserine is present on Ser-502.

It belongs to the kinesin light chain family. Oligomer composed of two heavy chains and two light chains. Associates with microtubulin in an ATP-dependent manner. Interacts with KIF5C. Interacts with ODF1. Interacts with LRGUK. Interacts with VDAC2.

It localises to the cytoplasm. It is found in the cytoskeleton. Its subcellular location is the mitochondrion. Functionally, kinesin is a microtubule-associated force-producing protein that may play a role in organelle transport. Plays a role during spermiogenesis in the development of the sperm tail midpiece and in the normal function of spermatozoa. May play a role in the formation of the mitochondrial sheath formation in the developing spermatid midpiece. The polypeptide is Kinesin light chain 3 (KLC3) (Pongo abelii (Sumatran orangutan)).